Here is a 549-residue protein sequence, read N- to C-terminus: Ceramide kinase 1 (549 aa).

A DAGKc domain is found at 162 to 316; that stretch reads NRPKNIIIFI…VDVCTVHQHQ (155 aa). ATP-binding positions include 172-174 and 205-209; these read NPF and TERAN. Residue 233 to 236 participates in substrate binding; the sequence is GGDG. Asp-235 acts as the Proton donor/acceptor in catalysis. ATP contacts are provided by residues Glu-240, 277-279, Arg-342, Arg-348, and 500-502; these read GSA and DGE.

The catalysed reaction is an N-acylsphing-4-enine + ATP = an N-acylsphing-4-enine 1-phosphate + ADP + H(+). It catalyses the reaction an N-acyl-15-methylhexadecasphing-4-enine + ATP = an N-acyl-15-methylhexadecasphing-4-enine-1-phosphate + ADP + H(+). It functions in the pathway lipid metabolism; sphingolipid metabolism. Catalyzes the phosphorylation of ceramide to form ceramide 1-phosphate. C.elegans contain specific sphingoid bases, which are unique or different in structure compared to the sphingoid bases found in other animals. Two examples of these distinctive compounds are: 15-methylhexadecasphinganine and 15-methylhexadecasphing-4-enine. The chain is Ceramide kinase 1 from Caenorhabditis elegans.